A 384-amino-acid chain; its full sequence is Prokineticin receptor 2 (384 aa).

Over 1-54 the chain is Extracellular; the sequence is MAAQNGNTSFTPNFNPPQDHASSLSFNFSYGDYDLPMDEDEDMTKTRTFFAAKI. Asparagine 7 and asparagine 27 each carry an N-linked (GlcNAc...) asparagine glycan. A helical membrane pass occupies residues 55–75; sequence VIGIALAGIMLVCGIGNFVFI. Residues 76 to 89 are Cytoplasmic-facing; the sequence is AALTRYKKLRNLTN. The helical transmembrane segment at 90–110 threads the bilayer; that stretch reads LLIANLAISDFLVAIICCPFE. At 111 to 136 the chain is on the extracellular side; the sequence is MDYYVVRQLSWEHGHVLCASVNYLRT. Cysteine 128 and cysteine 208 are disulfide-bonded. Residues 137 to 157 form a helical membrane-spanning segment; it reads VSLYVSTNALLAIAIDRYLAI. The Cytoplasmic portion of the chain corresponds to 158-171; the sequence is VHPLKPRMNYQTAS. Residues 172-192 traverse the membrane as a helical segment; sequence FLIALVWMVSILIAIPSAYFA. Over 193-223 the chain is Extracellular; it reads TETVLFIVKSQEKIFCGQIWPVDQQLYYKSY. The chain crosses the membrane as a helical span at residues 224-244; it reads FLFIFGVEFVGPVVTMTLCYA. Topologically, residues 245-273 are cytoplasmic; sequence RISRELWFKAVPGFQTEQIRKRLRCRRKT. The helical transmembrane segment at 274–294 threads the bilayer; it reads VLVLMCILTAYVLCWAPFYGF. Topologically, residues 295-313 are extracellular; it reads TIVRDFFPTVFVKEKHYLT. A helical membrane pass occupies residues 314–334; it reads AFYVVECIAMSNSMINTVCFV. Over 335–384 the chain is Cytoplasmic; that stretch reads TVKNNTMKYFKKMMLLHWRPSQRGSKSSADLDLRTNGVPTTEEVDCIRLK.

Belongs to the G-protein coupled receptor 1 family. In terms of assembly, homodimer. Expressed in the ileocecum, thyroid gland, pituitary gland, salivary gland, adrenal gland, testis, ovary and brain.

The protein localises to the cell membrane. In terms of biological role, receptor for prokineticin 2. Exclusively coupled to the G(q) subclass of heteromeric G proteins. Activation leads to mobilization of calcium, stimulation of phosphoinositide turnover and activation of p44/p42 mitogen-activated protein kinase. The sequence is that of Prokineticin receptor 2 (PROKR2) from Homo sapiens (Human).